We begin with the raw amino-acid sequence, 252 residues long: Phosphoglycolate phosphatase (252 aa).

The active-site Nucleophile is the Asp13. Mg(2+)-binding residues include Asp13, Asp15, and Asp192.

It belongs to the HAD-like hydrolase superfamily. CbbY/CbbZ/Gph/YieH family. In terms of assembly, monomer. Mg(2+) is required as a cofactor. Chloride serves as cofactor.

The enzyme catalyses 2-phosphoglycolate + H2O = glycolate + phosphate. It participates in organic acid metabolism; glycolate biosynthesis; glycolate from 2-phosphoglycolate: step 1/1. Its function is as follows. Specifically catalyzes the dephosphorylation of 2-phosphoglycolate. Is involved in the dissimilation of the intracellular 2-phosphoglycolate formed during the DNA repair of 3'-phosphoglycolate ends, a major class of DNA lesions induced by oxidative stress. The protein is Phosphoglycolate phosphatase of Shigella flexneri.